Consider the following 254-residue polypeptide: Mamu class II histocompatibility antigen, DR alpha chain (254 aa).

A signal peptide spans 1-25 (MAESGVPVLGFFIIAVLMSAQESWA). The tract at residues 26 to 109 (IKEEHVIIQA…KRSNNTPITN (84 aa)) is alpha-1. Residues 26 to 216 (IKEEHVIIQA…APSPLPETTE (191 aa)) are Extracellular-facing. N-linked (GlcNAc...) asparagine glycosylation occurs at Asn-103. The alpha-2 stretch occupies residues 110 to 203 (VPPEVTVLTN…CLDAPLLKHW (94 aa)). Residues 112–204 (PEVTVLTNSP…LDAPLLKHWE (93 aa)) enclose the Ig-like C1-type domain. Cysteines 132 and 188 form a disulfide. The interval 204-216 (EFDAPSPLPETTE) is connecting peptide. The helical transmembrane segment at 217–239 (NVVCALGLIVGLVGIIVGTVFII) threads the bilayer. The Cytoplasmic segment spans residues 240–254 (KGVRKSNAAERRGPL). Residue Lys-244 forms a Glycyl lysine isopeptide (Lys-Gly) (interchain with G-Cter in ubiquitin) linkage.

Belongs to the MHC class II family. In terms of assembly, heterodimer of an alpha chain and a beta chain.

It is found in the membrane. This chain is Mamu class II histocompatibility antigen, DR alpha chain (Mamu-DRA), found in Macaca mulatta (Rhesus macaque).